A 490-amino-acid chain; its full sequence is Cytochrome P450 2C54 (490 aa).

S127 is subject to Phosphoserine. N6-acetyllysine is present on residues K252 and K375. C435 is a binding site for heme.

Belongs to the cytochrome P450 family. Heme is required as a cofactor. As to expression, expressed in liver.

The protein resides in the endoplasmic reticulum membrane. The protein localises to the microsome membrane. The enzyme catalyses an organic molecule + reduced [NADPH--hemoprotein reductase] + O2 = an alcohol + oxidized [NADPH--hemoprotein reductase] + H2O + H(+). Metabolizes arachidonic acid mainly to 12-hydroxyeicosatetraenoic acid (HETE). In Mus musculus (Mouse), this protein is Cytochrome P450 2C54.